The sequence spans 283 residues: Pantothenate synthetase (283 aa).

31-38 (MGALHDGH) is a binding site for ATP. Histidine 38 serves as the catalytic Proton donor. Glutamine 62 contributes to the (R)-pantoate binding site. Glutamine 62 serves as a coordination point for beta-alanine. 148–151 (GKKD) contributes to the ATP binding site. (R)-pantoate is bound at residue glutamine 154. ATP-binding positions include isoleucine 177 and 185–188 (KSSR).

Belongs to the pantothenate synthetase family. As to quaternary structure, homodimer.

It localises to the cytoplasm. The catalysed reaction is (R)-pantoate + beta-alanine + ATP = (R)-pantothenate + AMP + diphosphate + H(+). Its pathway is cofactor biosynthesis; (R)-pantothenate biosynthesis; (R)-pantothenate from (R)-pantoate and beta-alanine: step 1/1. Catalyzes the condensation of pantoate with beta-alanine in an ATP-dependent reaction via a pantoyl-adenylate intermediate. The sequence is that of Pantothenate synthetase from Oceanobacillus iheyensis (strain DSM 14371 / CIP 107618 / JCM 11309 / KCTC 3954 / HTE831).